A 274-amino-acid chain; its full sequence is Diaminopimelate epimerase (274 aa).

Substrate-binding residues include asparagine 11, glutamine 44, and asparagine 64. Cysteine 73 functions as the Proton donor in the catalytic mechanism. Substrate-binding positions include 74-75 (GN), asparagine 157, asparagine 190, and 208-209 (ER). The active-site Proton acceptor is the cysteine 217. 218–219 (GS) contacts substrate.

This sequence belongs to the diaminopimelate epimerase family. In terms of assembly, homodimer.

It localises to the cytoplasm. The catalysed reaction is (2S,6S)-2,6-diaminopimelate = meso-2,6-diaminopimelate. Its pathway is amino-acid biosynthesis; L-lysine biosynthesis via DAP pathway; DL-2,6-diaminopimelate from LL-2,6-diaminopimelate: step 1/1. Functionally, catalyzes the stereoinversion of LL-2,6-diaminopimelate (L,L-DAP) to meso-diaminopimelate (meso-DAP), a precursor of L-lysine and an essential component of the bacterial peptidoglycan. In Edwardsiella ictaluri (strain 93-146), this protein is Diaminopimelate epimerase.